The following is a 309-amino-acid chain: MTGNGADAMKKSRSIRKDNLAGYAFISPFIIGFLCFTVIPMGASLFLSFTSYDLFTAPKWIGLDNFKEMFTGDEKYWQSLKVTFTYVLAGVPLRLGFALFIAVILNNAAKGTAIYRTLFYLPSIIGGSVAVAIMWRNIFGNDGVINALLFFVGIDQKILWYQNPTSALWTLILLSVWQFGSSMLIFLAGLKNIPSSYLEAASVDGANRVQRFFKITLPILTPIIFFNLVMQTISAFMTFTPAYIISKGEGGPLDGTLLYSLYLFQRAFNYFQMGYASAMAWVMLVIVGLITLILFKTSSYWVHYESKEE.

Helical transmembrane passes span F29 to F49, F84 to I104, I114 to M134, A167 to L187, L217 to M237, and Y275 to F295. Positions L80–L294 constitute an ABC transmembrane type-1 domain.

It belongs to the binding-protein-dependent transport system permease family. MalFG subfamily.

It is found in the cell membrane. Functionally, part of a binding-protein-dependent transport system. Probably responsible for the translocation of the substrate across the membrane. The sequence is that of Probable ABC transporter permease protein YesP (yesP) from Bacillus subtilis (strain 168).